Here is a 305-residue protein sequence, read N- to C-terminus: UDP-3-O-acyl-N-acetylglucosamine deacetylase (305 aa).

Residues His78, His237, and Asp241 each coordinate Zn(2+). His264 acts as the Proton donor in catalysis.

This sequence belongs to the LpxC family. Requires Zn(2+) as cofactor.

The enzyme catalyses a UDP-3-O-[(3R)-3-hydroxyacyl]-N-acetyl-alpha-D-glucosamine + H2O = a UDP-3-O-[(3R)-3-hydroxyacyl]-alpha-D-glucosamine + acetate. It participates in glycolipid biosynthesis; lipid IV(A) biosynthesis; lipid IV(A) from (3R)-3-hydroxytetradecanoyl-[acyl-carrier-protein] and UDP-N-acetyl-alpha-D-glucosamine: step 2/6. Catalyzes the hydrolysis of UDP-3-O-myristoyl-N-acetylglucosamine to form UDP-3-O-myristoylglucosamine and acetate, the committed step in lipid A biosynthesis. The sequence is that of UDP-3-O-acyl-N-acetylglucosamine deacetylase from Paraburkholderia xenovorans (strain LB400).